The following is a 97-amino-acid chain: Apolipoprotein C-II (97 aa).

The N-terminal stretch at 1–22 is a signal peptide; sequence MGSRFFLALFLVLLVLGNEVQG. The interval 63–71 is lipid binding; the sequence is SVDEKLRDM. The lipoprotein lipase cofactor stretch occupies residues 75-97; the sequence is SSAAMSTYAGIFTDQLLTLLKGE.

Belongs to the apolipoprotein C2 family. Proapolipoprotein C-II is synthesized as a sialic acid containing glycoprotein which is subsequently desialylated prior to its proteolytic processing. In terms of processing, proapolipoprotein C-II, the major form found in plasma undergoes proteolytic cleavage of its N-terminal hexapeptide to generate the mature form apolipoprotein C-II, which occurs as the minor form in plasma.

Its subcellular location is the secreted. Component of chylomicrons, very low-density lipoproteins (VLDL), low-density lipoproteins (LDL), and high-density lipoproteins (HDL) in plasma. Plays an important role in lipoprotein metabolism as an activator of lipoprotein lipase. The chain is Apolipoprotein C-II (Apoc2) from Grammomys surdaster (African woodland thicket rat).